A 475-amino-acid polypeptide reads, in one-letter code: Luvungin A synthase CYP716AC1 (475 aa).

The chain crosses the membrane as a helical span at residues 3-23 (FIILSLLLLSLALYSLYYVII). A heme-binding site is contributed by C423.

This sequence belongs to the cytochrome P450 family. Requires heme as cofactor. Expressed in flowers, maturing fruits and in juice vesicles.

It localises to the membrane. The catalysed reaction is (21S)-21-acetoxyl-apo-melianone + reduced [NADPH--hemoprotein reductase] + O2 = luvungin A + oxidized [NADPH--hemoprotein reductase] + H2O + H(+). It functions in the pathway secondary metabolite biosynthesis; terpenoid biosynthesis. Its function is as follows. Monooxygenase involved in the biosynthesis of limonoids triterpene natural products such as limonin, a compound with insecticidal activity responsible for the bitter taste in citrus. Catalyzes the conversion of (21S)-21-acetoxyl-apo-melianone to luvungin A. The sequence is that of Luvungin A synthase CYP716AC1 from Citrus sinensis (Sweet orange).